Reading from the N-terminus, the 417-residue chain is MYKKVRVVLENGDVFEGVMLPPTQFSDSDIVVLKLKNGYNVGFKKGRIKEIVELGEVQTAPLSAKPMPKIEGEKVWLLATGGTILSRVDYVTGGVYPTLSVDYLFEVLGGLEAPIEAEEVTAKFSEDMTPALWGVIAERVAEAFKKGARGVVVLHGTDTMQYTAAALAFAFKSAPGPIALVGAQRSSDRPSTDAVLNLKAAIAVTARAPFAESVVVMHKTSGDTVVAVHRGTRVRKMHTSRRDTFQSINTTPIAEYYPEKELLQVLTDVYKERGGLDYTAKFEEAVALVKFYPGMHPRLLEALLEVGMKGVVIEGTGFGHVGEGVLPAVKKLIDAGVIVAMTSQTLYGRVNLYVYRRGRELLSMGVIPLEDMLPETAYAKMSWALANFKREEVPRVLTTPIAYEMSPRSDPLVFGGL.

In terms of domain architecture, Asparaginase/glutaminase spans 73-400; the sequence is EKVWLLATGG…EEVPRVLTTP (328 aa). Active-site residues include Thr83, Thr157, Asp158, and Lys236.

The protein belongs to the asparaginase 1 family. GatD subfamily. Heterodimer of GatD and GatE.

The catalysed reaction is L-glutamyl-tRNA(Gln) + L-glutamine + ATP + H2O = L-glutaminyl-tRNA(Gln) + L-glutamate + ADP + phosphate + H(+). Functionally, allows the formation of correctly charged Gln-tRNA(Gln) through the transamidation of misacylated Glu-tRNA(Gln) in organisms which lack glutaminyl-tRNA synthetase. The reaction takes place in the presence of glutamine and ATP through an activated gamma-phospho-Glu-tRNA(Gln). The GatDE system is specific for glutamate and does not act on aspartate. The sequence is that of Glutamyl-tRNA(Gln) amidotransferase subunit D from Pyrobaculum aerophilum (strain ATCC 51768 / DSM 7523 / JCM 9630 / CIP 104966 / NBRC 100827 / IM2).